The following is a 158-amino-acid chain: NAD(P)H-quinone oxidoreductase subunit N (158 aa).

It belongs to the complex I NdhN subunit family. NDH-1 can be composed of about 15 different subunits; different subcomplexes with different compositions have been identified which probably have different functions.

It localises to the cellular thylakoid membrane. The enzyme catalyses a plastoquinone + NADH + (n+1) H(+)(in) = a plastoquinol + NAD(+) + n H(+)(out). It catalyses the reaction a plastoquinone + NADPH + (n+1) H(+)(in) = a plastoquinol + NADP(+) + n H(+)(out). In terms of biological role, NDH-1 shuttles electrons from an unknown electron donor, via FMN and iron-sulfur (Fe-S) centers, to quinones in the respiratory and/or the photosynthetic chain. The immediate electron acceptor for the enzyme in this species is believed to be plastoquinone. Couples the redox reaction to proton translocation, and thus conserves the redox energy in a proton gradient. Cyanobacterial NDH-1 also plays a role in inorganic carbon-concentration. This chain is NAD(P)H-quinone oxidoreductase subunit N, found in Microcystis aeruginosa (strain NIES-843 / IAM M-2473).